The chain runs to 467 residues: DNA methyltransferase 1-associated protein 1 (467 aa).

2 stretches are compositionally biased toward basic and acidic residues: residues 1–11 and 26–48; these read MATGADVRDIL and SKKDIINPDKKKSKKSSETLTFK. Positions 1–48 are disordered; the sequence is MATGADVRDILELGGPEGDAASGTISKKDIINPDKKKSKKSSETLTFK. Residue Lys-27 forms a Glycyl lysine isopeptide (Lys-Gly) (interchain with G-Cter in SUMO2) linkage. Residues 149–199 form the SANT domain; that stretch reads DDAWTKAETDHLFDLSRRFDLRFVVIHDRYDHQQFKKRSVEDLKERYYHIC. Lys-214 is covalently cross-linked (Glycyl lysine isopeptide (Lys-Gly) (interchain with G-Cter in SUMO2)). Positions 225–275 form a coiled coil; the sequence is RRKEQLERLYNRTPEQVAEEEYLLQELRKIEARKKEREKRSQDLQKLITAA. Basic and acidic residues predominate over residues 258-267; the sequence is KKEREKRSQD. Disordered stretches follow at residues 258 to 305 and 404 to 467; these read KKER…PAVP and LGGP…AKKP. Residues 406–422 are compositionally biased toward low complexity; the sequence is GPATPASGPGPASAEPA. Phosphothreonine is present on Thr-445. Ser-448 carries the phosphoserine modification.

In terms of assembly, component of the NuA4 histone acetyltransferase complex which contains the catalytic subunit KAT5/TIP60 and the subunits EP400, TRRAP/PAF400, BRD8/SMAP, EPC1, DMAP1/DNMAP1, RUVBL1/TIP49, RUVBL2, ING3, actin, ACTL6A/BAF53A, MORF4L1/MRG15, MORF4L2/MRGX, MRGBP, YEATS4/GAS41, VPS72/YL1 and MEAF6. Component of a NuA4-related complex which contains EP400, TRRAP/PAF400, SRCAP, BRD8/SMAP, EPC1, DMAP1/DNMAP1, RUVBL1/TIP49, RUVBL2, actin, ACTL6A/BAF53A, VPS72 and YEATS4/GAS41. DMAP1 also forms a complex with DNMT1 and HDAC2. Throughout S phase it interacts directly with the N-terminus of DNMT1, which serves to recruit DMAP1 to replication foci. DMAP1 interacts with ING1, a component of the mSin3A transcription repressor complex, although this interaction is not required for recruitment of ING1 to heterochromatin. Interacts directly with the transcriptional corepressor TSG101. Interacts with the pro-apoptotic protein DAXX. Interacts with URI1.

It localises to the nucleus. Its subcellular location is the cytoplasm. In terms of biological role, involved in transcription repression and activation. Its interaction with HDAC2 may provide a mechanism for histone deacetylation in heterochromatin following replication of DNA at late firing origins. Can also repress transcription independently of histone deacetylase activity. May specifically potentiate DAXX-mediated repression of glucocorticoid receptor-dependent transcription. Component of the NuA4 histone acetyltransferase (HAT) complex which is involved in transcriptional activation of select genes principally by acetylation of nucleosomal histones H4 and H2A. This modification may both alter nucleosome - DNA interactions and promote interaction of the modified histones with other proteins which positively regulate transcription. This complex may be required for the activation of transcriptional programs associated with oncogene and proto-oncogene mediated growth induction, tumor suppressor mediated growth arrest and replicative senescence, apoptosis, and DNA repair. NuA4 may also play a direct role in DNA repair when recruited to sites of DNA damage. Participates in the nuclear localization of URI1 and increases its transcriptional corepressor activity. The protein is DNA methyltransferase 1-associated protein 1 (DMAP1) of Homo sapiens (Human).